Here is a 79-residue protein sequence, read N- to C-terminus: Cyclin-dependent kinases regulatory subunit 1 (79 aa).

Ser-2 is modified (N-acetylserine).

The protein belongs to the CKS family. Forms a homohexamer that can probably bind six kinase subunits.

Binds to the catalytic subunit of the cyclin dependent kinases and is essential for their biological function. This chain is Cyclin-dependent kinases regulatory subunit 1 (CKS1B), found in Bos taurus (Bovine).